Consider the following 289-residue polypeptide: Diaminopimelate epimerase (289 aa).

Substrate-binding residues include Asn-11 and Asn-78. Residue Cys-87 is the Proton donor of the active site. Residues Gly-88 to Asn-89, Asn-163, Asn-199, and Glu-217 to Arg-218 each bind substrate. Catalysis depends on Cys-226, which acts as the Proton acceptor. Gly-227–Thr-228 contacts substrate.

Belongs to the diaminopimelate epimerase family. In terms of assembly, homodimer.

Its subcellular location is the cytoplasm. It catalyses the reaction (2S,6S)-2,6-diaminopimelate = meso-2,6-diaminopimelate. It participates in amino-acid biosynthesis; L-lysine biosynthesis via DAP pathway; DL-2,6-diaminopimelate from LL-2,6-diaminopimelate: step 1/1. In terms of biological role, catalyzes the stereoinversion of LL-2,6-diaminopimelate (L,L-DAP) to meso-diaminopimelate (meso-DAP), a precursor of L-lysine and an essential component of the bacterial peptidoglycan. This is Diaminopimelate epimerase from Mycobacterium bovis (strain ATCC BAA-935 / AF2122/97).